The primary structure comprises 469 residues: MSAPRTLYDKIWDDHLVDEQADGTCLLYIDRHLVHEVTSPQAFEGLRMTGRKVRAPEKTLAVVDHNVPTSPDRHLGIKNEESRIQVEALATNAAEFGVEYYSASDKRQGIVHIVGPEQGFTLPGMTIVCGDSHTSTHGAFGALAHGIGTSEVEHVLATQTLIQKKAKNMLVRVDGQLPPHVTAKDIILAIIGEIGTAGGTGHVIEFAGEAIRALSMEGRMTVCNMTIEGGARAGLIAPDEKTFEYIKGKPRAPKGEALEQAIAYWKTLQTDEGAHYDRVVVLDAASLPPIVSWGSSPEDVISVQGIVPNPDDIPDETKRTSKWRALDYMGLKPGTKMTDITLDRVFIGSCTNGRIEDLREVAKVVEGKTVAPTVDAMIVPGSGLVKEQAEAEGLDKIFKAAGFDWREPGCSMCLAMNDDRLKPGERCASTSNRNFEGRQGFKGRTHLVSPAMAAAAAIAGHFVDIREWN.

Residues cysteine 350, cysteine 410, and cysteine 413 each coordinate [4Fe-4S] cluster.

It belongs to the aconitase/IPM isomerase family. LeuC type 1 subfamily. As to quaternary structure, heterodimer of LeuC and LeuD. [4Fe-4S] cluster serves as cofactor.

The catalysed reaction is (2R,3S)-3-isopropylmalate = (2S)-2-isopropylmalate. The protein operates within amino-acid biosynthesis; L-leucine biosynthesis; L-leucine from 3-methyl-2-oxobutanoate: step 2/4. Its function is as follows. Catalyzes the isomerization between 2-isopropylmalate and 3-isopropylmalate, via the formation of 2-isopropylmaleate. The chain is 3-isopropylmalate dehydratase large subunit from Rhizobium johnstonii (strain DSM 114642 / LMG 32736 / 3841) (Rhizobium leguminosarum bv. viciae).